A 602-amino-acid polypeptide reads, in one-letter code: Sulfite reductase [NADPH] flavoprotein alpha-component (602 aa).

In terms of domain architecture, Flavodoxin-like spans 68-206 (ITIISASQTG…NYIQWSEELL (139 aa)). Residues 74-79 (SQTGNA), 121-124 (STQG), and 157-166 (LGDVSYNLFC) contribute to the FMN site. The FAD-binding FR-type domain occupies 237–451 (YKPAVATVLL…VEEKSNFRLP (215 aa)). Residues Thr325, Lys359, 389–392 (RLYS), 407–409 (TVG), and 422–425 (GGSS) each bind FAD. NADP(+) is bound by residues 522–523 (SR), 528–532 (KIYVQ), and Asp564. Residue Tyr602 participates in FAD binding.

It belongs to the NADPH-dependent sulphite reductase flavoprotein subunit CysJ family. The protein in the N-terminal section; belongs to the flavodoxin family. In the C-terminal section; belongs to the flavoprotein pyridine nucleotide cytochrome reductase family. Alpha(8)-beta(8). The alpha component is a flavoprotein, the beta component is a hemoprotein. FAD serves as cofactor. Requires FMN as cofactor.

It carries out the reaction hydrogen sulfide + 3 NADP(+) + 3 H2O = sulfite + 3 NADPH + 4 H(+). Its pathway is sulfur metabolism; hydrogen sulfide biosynthesis; hydrogen sulfide from sulfite (NADPH route): step 1/1. Component of the sulfite reductase complex that catalyzes the 6-electron reduction of sulfite to sulfide. This is one of several activities required for the biosynthesis of L-cysteine from sulfate. The flavoprotein component catalyzes the electron flow from NADPH -&gt; FAD -&gt; FMN to the hemoprotein component. The chain is Sulfite reductase [NADPH] flavoprotein alpha-component from Buchnera aphidicola subsp. Schizaphis graminum (strain Sg).